We begin with the raw amino-acid sequence, 566 residues long: Cyclin-dependent kinase-like 2 (566 aa).

A Protein kinase domain is found at 4–287 (YENLGLVGEG…CAELLHHDFF (284 aa)). Residues 10 to 18 (VGEGSYGMV) and Lys-33 contribute to the ATP site. Positions 45–51 (KKIAMRE) match the [NKR]KIAxRE motif. Asp-126 serves as the catalytic Proton acceptor. 2 disordered regions span residues 307–334 (DARN…GEER) and 545–566 (QVSG…EHQH). Over residues 320 to 334 (RKKEKEKDDSLGEER) the composition is skewed to basic and acidic residues.

Belongs to the protein kinase superfamily. CMGC Ser/Thr protein kinase family. CDC2/CDKX subfamily.

The protein localises to the cytoplasm. It localises to the nucleus. It carries out the reaction L-seryl-[protein] + ATP = O-phospho-L-seryl-[protein] + ADP + H(+). It catalyses the reaction L-threonyl-[protein] + ATP = O-phospho-L-threonyl-[protein] + ADP + H(+). This is Cyclin-dependent kinase-like 2 from Oryctolagus cuniculus (Rabbit).